The sequence spans 356 residues: Homoserine O-acetyltransferase (356 aa).

The AB hydrolase-1 domain occupies 50–335 (NVILVCHALT…DEPYGHDAFL (286 aa)). The active-site Nucleophile is the serine 146. Arginine 215 contributes to the substrate binding site. Catalysis depends on residues aspartate 302 and histidine 331. Aspartate 332 is a binding site for substrate.

Belongs to the AB hydrolase superfamily. MetX family. As to quaternary structure, homodimer.

The protein resides in the cytoplasm. It catalyses the reaction L-homoserine + acetyl-CoA = O-acetyl-L-homoserine + CoA. The protein operates within amino-acid biosynthesis; L-methionine biosynthesis via de novo pathway; O-acetyl-L-homoserine from L-homoserine: step 1/1. Transfers an acetyl group from acetyl-CoA to L-homoserine, forming acetyl-L-homoserine. The polypeptide is Homoserine O-acetyltransferase (Chlorobaculum tepidum (strain ATCC 49652 / DSM 12025 / NBRC 103806 / TLS) (Chlorobium tepidum)).